The primary structure comprises 192 residues: Phosphoheptose isomerase (192 aa).

Positions 37–192 (LADSFKAGGK…IQLIEKEMVK (156 aa)) constitute an SIS domain. 52-54 (NGG) is a binding site for substrate. Zn(2+)-binding residues include His-61 and Glu-65. Substrate contacts are provided by residues Glu-65, 93 to 94 (ND), 119 to 121 (STS), Ser-124, and Gln-172. Gln-172 and His-180 together coordinate Zn(2+).

The protein belongs to the SIS family. GmhA subfamily. In terms of assembly, homotetramer. The cofactor is Zn(2+).

The protein localises to the cytoplasm. The enzyme catalyses 2 D-sedoheptulose 7-phosphate = D-glycero-alpha-D-manno-heptose 7-phosphate + D-glycero-beta-D-manno-heptose 7-phosphate. Its pathway is carbohydrate biosynthesis; D-glycero-D-manno-heptose 7-phosphate biosynthesis; D-glycero-alpha-D-manno-heptose 7-phosphate and D-glycero-beta-D-manno-heptose 7-phosphate from sedoheptulose 7-phosphate: step 1/1. In terms of biological role, catalyzes the isomerization of sedoheptulose 7-phosphate in D-glycero-D-manno-heptose 7-phosphate. The sequence is that of Phosphoheptose isomerase from Enterobacter sp. (strain 638).